The chain runs to 593 residues: High affinity cGMP-specific 3',5'-cyclic phosphodiesterase 9A (593 aa).

Residues 87–142 (SAGVEDKRTTSRGQSAERPLRDRRVVGLEQPRREGAFESGQVEPRPREPQGCCQEG) form a disordered region. A compositionally biased stretch (basic and acidic residues) spans 104 to 122 (RPLRDRRVVGLEQPRREGA). A PDEase domain is found at 236–557 (PRRDVPTYPK…DRYEELKRID (322 aa)). Catalysis depends on H312, which acts as the Proton donor. 3',5'-cyclic GMP is bound at residue 312–316 (HNFRH). 3 residues coordinate Zn(2+): H316, H352, and D353. D353 is a 3',5'-cyclic GMP binding site. Residue D353 coordinates Mg(2+). At S379 the chain carries Phosphoserine. Residues D462, Y484, and 512 to 513 (AQ) each bind 3',5'-cyclic GMP. Residue D462 participates in Zn(2+) binding. The disordered stretch occupies residues 564–593 (QKKTDSLTSGATEKSRERSRDVKNSEGDCA). Positions 576 to 593 (EKSRERSRDVKNSEGDCA) are enriched in basic and acidic residues.

The protein belongs to the cyclic nucleotide phosphodiesterase family. PDE9 subfamily. In terms of assembly, homodimer. The cofactor is Zn(2+). It depends on Mg(2+) as a cofactor.

The protein localises to the cell projection. It is found in the ruffle membrane. The protein resides in the cytoplasm. Its subcellular location is the perinuclear region. It localises to the golgi apparatus. The protein localises to the endoplasmic reticulum. It is found in the cell membrane. The protein resides in the sarcolemma. The enzyme catalyses 3',5'-cyclic GMP + H2O = GMP + H(+). It participates in purine metabolism; 3',5'-cyclic GMP degradation; GMP from 3',5'-cyclic GMP: step 1/1. With respect to regulation, specifically inhibited by a compound named 3r ((R)-2-((1-cyclopentyl-4-hydroxy-1H-pyrazolo[3,4-d]pyrimidin-6- yl)amino)-N-(4-methoxyphenyl)propanamide); the inhibitor forms a hydrogen bond with Tyr-484, Ala-512 and Gln-513. Functionally, specifically hydrolyzes the second messenger cGMP, which is a key regulator of many important physiological processes. Highly specific: compared to other members of the cyclic nucleotide phosphodiesterase family, has the highest affinity and selectivity for cGMP. Specifically regulates natriuretic-peptide-dependent cGMP signaling in heart, acting as a regulator of cardiac hypertrophy in myocytes and muscle. Does not regulate nitric oxide-dependent cGMP in heart. Additional experiments are required to confirm whether its ability to hydrolyze natriuretic-peptide-dependent cGMP is specific to heart or is a general feature of the protein. In brain, involved in cognitive function, such as learning and long-term memory. The polypeptide is High affinity cGMP-specific 3',5'-cyclic phosphodiesterase 9A (PDE9A) (Pan troglodytes (Chimpanzee)).